The following is a 156-amino-acid chain: C-type lectin lectoxin-Phi1 (156 aa).

Positions 1–23 (MGRFIFVSLGLLVLAFSLSGIGA) are cleaved as a signal peptide. Disulfide bonds link Cys27/Cys38, Cys55/Cys154, and Cys129/Cys146. Residues 34–155 (HNVSCYKLIN…CNRRHRFLCK (122 aa)) form the C-type lectin domain. N-linked (GlcNAc...) asparagine glycans are attached at residues Asn35 and Asn109. The short motif at 119 to 121 (EPN) is the Mannose-binding element. Glu127, Asn142, and Asp143 together coordinate Ca(2+).

It belongs to the true venom lectin family. Expressed by the venom gland.

The protein resides in the secreted. Functionally, mannose-binding lectin which recognizes specific carbohydrate structures and agglutinates a variety of animal cells by binding to cell-surface glycoproteins and glycolipids. May be a calcium-dependent lectin. The sequence is that of C-type lectin lectoxin-Phi1 from Philodryas olfersii (Green snake).